The primary structure comprises 324 residues: Glyoxylate/hydroxypyruvate reductase B (324 aa).

Residues Arg-237 and Glu-266 contribute to the active site. His-285 functions as the Proton donor in the catalytic mechanism.

This sequence belongs to the D-isomer specific 2-hydroxyacid dehydrogenase family. GhrB subfamily. In terms of assembly, homodimer.

The protein resides in the cytoplasm. It carries out the reaction glycolate + NADP(+) = glyoxylate + NADPH + H(+). The catalysed reaction is (R)-glycerate + NAD(+) = 3-hydroxypyruvate + NADH + H(+). It catalyses the reaction (R)-glycerate + NADP(+) = 3-hydroxypyruvate + NADPH + H(+). Catalyzes the NADPH-dependent reduction of glyoxylate and hydroxypyruvate into glycolate and glycerate, respectively. In Salmonella agona (strain SL483), this protein is Glyoxylate/hydroxypyruvate reductase B.